The primary structure comprises 166 residues: Regulatory protein RecX (166 aa).

This sequence belongs to the RecX family.

It is found in the cytoplasm. Its function is as follows. Modulates RecA activity. This is Regulatory protein RecX from Escherichia fergusonii (strain ATCC 35469 / DSM 13698 / CCUG 18766 / IAM 14443 / JCM 21226 / LMG 7866 / NBRC 102419 / NCTC 12128 / CDC 0568-73).